The chain runs to 625 residues: Chaperone protein DnaK (625 aa).

At threonine 197 the chain carries Phosphothreonine; by autocatalysis. A disordered region spans residues 598–625 (MYKKDDNASGEQSGGKKKDDDVIDAEVE).

The protein belongs to the heat shock protein 70 family.

In terms of biological role, acts as a chaperone. The chain is Chaperone protein DnaK from Campylobacter curvus (strain 525.92).